Here is a 351-residue protein sequence, read N- to C-terminus: Phosphoribosylformylglycinamidine cyclo-ligase (351 aa).

This sequence belongs to the AIR synthase family.

It is found in the cytoplasm. The enzyme catalyses 2-formamido-N(1)-(5-O-phospho-beta-D-ribosyl)acetamidine + ATP = 5-amino-1-(5-phospho-beta-D-ribosyl)imidazole + ADP + phosphate + H(+). Its pathway is purine metabolism; IMP biosynthesis via de novo pathway; 5-amino-1-(5-phospho-D-ribosyl)imidazole from N(2)-formyl-N(1)-(5-phospho-D-ribosyl)glycinamide: step 2/2. The chain is Phosphoribosylformylglycinamidine cyclo-ligase from Burkholderia pseudomallei (strain 1710b).